The chain runs to 222 residues: Glutathione transferase GST 23 (222 aa).

The region spanning Lys-4–Tyr-83 is the GST N-terminal domain. Residues Ser-14, Lys-41, Val-55, and Glu-67–Ser-68 contribute to the glutathione site. A GST C-terminal domain is found at Asp-89–Leu-220.

This sequence belongs to the GST superfamily.

It carries out the reaction RX + glutathione = an S-substituted glutathione + a halide anion + H(+). Functionally, involved in multiple disease resistance (MDR). In Zea mays (Maize), this protein is Glutathione transferase GST 23.